Here is a 259-residue protein sequence, read N- to C-terminus: uncharacterized protein (259 aa).

Residues 19–249 form the Radical SAM core domain; it reads TKIPGAKYVI…DEVINTIKKK (231 aa). Residues Cys-34, Cys-38, and Cys-41 each contribute to the [4Fe-4S] cluster site.

[4Fe-4S] cluster is required as a cofactor.

This is an uncharacterized protein from Methanocaldococcus jannaschii (strain ATCC 43067 / DSM 2661 / JAL-1 / JCM 10045 / NBRC 100440) (Methanococcus jannaschii).